The following is a 334-amino-acid chain: Tryptophan--tRNA ligase (334 aa).

Residues 11-13 (QPS) and 19-20 (GN) contribute to the ATP site. A 'HIGH' region motif is present at residues 12–20 (PSGELTIGN). Asp-135 lines the L-tryptophan pocket. Residues 147–149 (GED), Val-186, and 195–199 (KMSKS) each bind ATP. The short motif at 195 to 199 (KMSKS) is the 'KMSKS' region element.

The protein belongs to the class-I aminoacyl-tRNA synthetase family. Homodimer.

It is found in the cytoplasm. The enzyme catalyses tRNA(Trp) + L-tryptophan + ATP = L-tryptophyl-tRNA(Trp) + AMP + diphosphate + H(+). Functionally, catalyzes the attachment of tryptophan to tRNA(Trp). Amino acylates tRNA(Trp) with both L- and D-tryptophan, although D-tryptophan is a poor substrate. This is Tryptophan--tRNA ligase from Escherichia coli (strain K12).